Consider the following 355-residue polypeptide: Elongation factor Ts (355 aa).

Positions 82–85 (TDFV) are involved in Mg(2+) ion dislocation from EF-Tu.

Belongs to the EF-Ts family.

The protein localises to the cytoplasm. Functionally, associates with the EF-Tu.GDP complex and induces the exchange of GDP to GTP. It remains bound to the aminoacyl-tRNA.EF-Tu.GTP complex up to the GTP hydrolysis stage on the ribosome. The chain is Elongation factor Ts from Helicobacter pylori (strain P12).